Reading from the N-terminus, the 302-residue chain is Ethylmalonyl-CoA decarboxylase (302 aa).

Belongs to the enoyl-CoA hydratase/isomerase family.

The protein localises to the cytoplasm. The protein resides in the cytosol. It catalyses the reaction (2S)-ethylmalonyl-CoA + H(+) = butanoyl-CoA + CO2. The enzyme catalyses (S)-methylmalonyl-CoA + H(+) = propanoyl-CoA + CO2. It carries out the reaction (2R)-ethylmalonyl-CoA + H(+) = butanoyl-CoA + CO2. Its function is as follows. Decarboxylates ethylmalonyl-CoA, a potentially toxic metabolite, to form butyryl-CoA, suggesting it might be involved in metabolite proofreading. Acts preferentially on (S)-ethylmalonyl-CoA but also has some activity on the (R)-isomer. Also has methylmalonyl-CoA decarboxylase activity at lower level. This Danio rerio (Zebrafish) protein is Ethylmalonyl-CoA decarboxylase (echdc1).